A 1002-amino-acid chain; its full sequence is Calmin (1002 aa).

The tract at residues 1-288 (MAAHEWDWFQ…IMTYVAQFLE (288 aa)) is actin-binding. The Calponin-homology (CH) 1 domain maps to 32–139 (NVQKRTFTRW…LIWNIILFFQ (108 aa)). Positions 149 to 168 (RNSPSSSLSPGSGGTDSDSS) are enriched in low complexity. The disordered stretch occupies residues 149 to 180 (RNSPSSSLSPGSGGTDSDSSFPPTPTAERSVA). The Calponin-homology (CH) 2 domain maps to 187 to 291 (RKAIKALLAW…YVAQFLERFP (105 aa)). A phosphoserine mark is found at S301 and S402. Disordered regions lie at residues 389–418 (QGGP…GRSN), 500–532 (NNNS…GENT), 581–716 (NKVP…SPPL), and 749–911 (DLKN…DSSI). Residues 396–409 (SDISEPSPESSILS) show a composition bias toward low complexity. Over residues 500 to 509 (NNNSQSSSCN) the composition is skewed to polar residues. Basic and acidic residues predominate over residues 585–606 (SPHETKPDEDAEAFENHAEKLG). Residues 607-617 (KRSIKSAHKKK) show a composition bias toward basic residues. Composition is skewed to basic and acidic residues over residues 618–635 (DSPE…HQDS) and 650–659 (PVDKKPEVHE). S619 carries the post-translational modification Phosphoserine. Positions 681–697 (GVGEELSSSPPSSCVSL) are enriched in low complexity. At T699 the chain carries Phosphothreonine. 2 positions are modified to phosphoserine: S713 and S769. Residues 776–794 (GSQSSSSSSVPGESLPSAS) show a composition bias toward low complexity. Residues 818–834 (PHEDHQQRETKENDPMD) are compositionally biased toward basic and acidic residues. Residues 835–846 (SHQSQESPNLEN) are compositionally biased toward polar residues. Phosphoserine is present on residues S838 and S841. Residues 854 to 863 (NVTKESISSK) are compositionally biased toward basic and acidic residues. Polar residues predominate over residues 898-910 (YSIPSRTSHSDSS). S907 carries the post-translational modification Phosphoserine. Residues 977 to 997 (MMYFILFLWLLVYCLLLFPQL) traverse the membrane as a helical; Anchor for type IV membrane protein segment.

In terms of tissue distribution, widely expressed at intermediate level.

It is found in the membrane. This Homo sapiens (Human) protein is Calmin (CLMN).